The primary structure comprises 422 residues: Dihydroorotase (422 aa).

Zn(2+) is bound by residues H57 and H59. Substrate is bound by residues 59–61 (HLR) and N91. Positions 149, 176, and 229 each coordinate Zn(2+). A substrate-binding site is contributed by N275. D302 provides a ligand contact to Zn(2+). The active site involves D302. Residues H306 and 320–321 (FG) each bind substrate.

Belongs to the metallo-dependent hydrolases superfamily. DHOase family. Class I DHOase subfamily. Zn(2+) serves as cofactor.

The enzyme catalyses (S)-dihydroorotate + H2O = N-carbamoyl-L-aspartate + H(+). It participates in pyrimidine metabolism; UMP biosynthesis via de novo pathway; (S)-dihydroorotate from bicarbonate: step 3/3. Its function is as follows. Catalyzes the reversible cyclization of carbamoyl aspartate to dihydroorotate. This chain is Dihydroorotase, found in Endomicrobium trichonymphae.